Consider the following 219-residue polypeptide: Thiamine-phosphate synthase (219 aa).

4-amino-2-methyl-5-(diphosphooxymethyl)pyrimidine is bound by residues 44–48 (QFREK) and asparagine 79. The Mg(2+) site is built by aspartate 80 and aspartate 99. Serine 117 is a binding site for 4-amino-2-methyl-5-(diphosphooxymethyl)pyrimidine. 143–145 (TST) lines the 2-[(2R,5Z)-2-carboxy-4-methylthiazol-5(2H)-ylidene]ethyl phosphate pocket. Residue lysine 146 participates in 4-amino-2-methyl-5-(diphosphooxymethyl)pyrimidine binding. 2-[(2R,5Z)-2-carboxy-4-methylthiazol-5(2H)-ylidene]ethyl phosphate contacts are provided by residues glycine 175 and 195-196 (IS).

The protein belongs to the thiamine-phosphate synthase family. It depends on Mg(2+) as a cofactor.

The catalysed reaction is 2-[(2R,5Z)-2-carboxy-4-methylthiazol-5(2H)-ylidene]ethyl phosphate + 4-amino-2-methyl-5-(diphosphooxymethyl)pyrimidine + 2 H(+) = thiamine phosphate + CO2 + diphosphate. The enzyme catalyses 2-(2-carboxy-4-methylthiazol-5-yl)ethyl phosphate + 4-amino-2-methyl-5-(diphosphooxymethyl)pyrimidine + 2 H(+) = thiamine phosphate + CO2 + diphosphate. It carries out the reaction 4-methyl-5-(2-phosphooxyethyl)-thiazole + 4-amino-2-methyl-5-(diphosphooxymethyl)pyrimidine + H(+) = thiamine phosphate + diphosphate. The protein operates within cofactor biosynthesis; thiamine diphosphate biosynthesis; thiamine phosphate from 4-amino-2-methyl-5-diphosphomethylpyrimidine and 4-methyl-5-(2-phosphoethyl)-thiazole: step 1/1. In terms of biological role, condenses 4-methyl-5-(beta-hydroxyethyl)thiazole monophosphate (THZ-P) and 2-methyl-4-amino-5-hydroxymethyl pyrimidine pyrophosphate (HMP-PP) to form thiamine monophosphate (TMP). The polypeptide is Thiamine-phosphate synthase (Bacillus thuringiensis subsp. konkukian (strain 97-27)).